The following is a 311-amino-acid chain: MADVLSVGVNLEAFSQAISAIQALRSSVSRVFDCLKDGMRNKETLEGREKAFIAHFQDNLHSVNRDLNELERLSNLVGKPSENHPLHNSGLLSLDPVQDKTPLYSQLLQAYKWSNKLQYHAGLASGLLNQQSLKRSANQMGVSAKRRPKAQPTTLVLPPQYVDDVISRIDRMFPEMSIHLSRPNGTSAMLLVTLGKVLKVIVVMRSLFIDRTIVKGYNENVYTEDGKLDIWSKSNYQVFQKVTDHATTALLHYQLPQMPDVVVRSFMTWLRSYIKLFQAPCQRCGKFLQDGLPPTWRDFRTLEAFHDTCRQ.

Serine 132 carries the phosphoserine modification. At lysine 134 the chain carries N6-methyllysine.

The protein belongs to the Mediator complex subunit 27 family. In terms of assembly, component of the Mediator complex, which is composed of MED1, MED4, MED6, MED7, MED8, MED9, MED10, MED11, MED12, MED13, MED13L, MED14, MED15, MED16, MED17, MED18, MED19, MED20, MED21, MED22, MED23, MED24, MED25, MED26, MED27, MED29, MED30, MED31, CCNC, CDK8 and CDC2L6/CDK11. The MED12, MED13, CCNC and CDK8 subunits form a distinct module termed the CDK8 module. Mediator containing the CDK8 module is less active than Mediator lacking this module in supporting transcriptional activation. Individual preparations of the Mediator complex lacking one or more distinct subunits have been variously termed ARC, CRSP, DRIP, PC2, SMCC and TRAP.

The protein localises to the nucleus. In terms of biological role, component of the Mediator complex, a coactivator involved in the regulated transcription of nearly all RNA polymerase II-dependent genes. Mediator functions as a bridge to convey information from gene-specific regulatory proteins to the basal RNA polymerase II transcription machinery. Mediator is recruited to promoters by direct interactions with regulatory proteins and serves as a scaffold for the assembly of a functional preinitiation complex with RNA polymerase II and the general transcription factors. The chain is Mediator of RNA polymerase II transcription subunit 27 (MED27) from Sus scrofa (Pig).